We begin with the raw amino-acid sequence, 104 residues long: Iron-sulfur cluster assembly protein CyaY (104 aa).

This sequence belongs to the frataxin family.

Functionally, involved in iron-sulfur (Fe-S) cluster assembly. May act as a regulator of Fe-S biogenesis. The chain is Iron-sulfur cluster assembly protein CyaY from Aeromonas salmonicida (strain A449).